A 37-amino-acid polypeptide reads, in one-letter code: Large ribosomal subunit protein bL36c (37 aa).

The protein belongs to the bacterial ribosomal protein bL36 family.

It localises to the plastid. The chain is Large ribosomal subunit protein bL36c from Cuscuta exaltata (Tall dodder).